The primary structure comprises 541 residues: Membrane protein insertase YidC (541 aa).

A helical transmembrane segment spans residues 6-26 (SLLVLALIFISFLVYQQWQLD). Residues 34–56 (EQTTSITATSDVPASSPSNSQAI) form a disordered region. A run of 4 helical transmembrane segments spans residues 337 to 357 (FWLL…IICV), 416 to 436 (LGGC…YWTF), 454 to 474 (LSAQ…MFLL), and 495 to 515 (PLVF…YWLV).

The protein belongs to the OXA1/ALB3/YidC family. Type 1 subfamily. Interacts with the Sec translocase complex via SecD. Specifically interacts with transmembrane segments of nascent integral membrane proteins during membrane integration.

It localises to the cell inner membrane. Its function is as follows. Required for the insertion and/or proper folding and/or complex formation of integral membrane proteins into the membrane. Involved in integration of membrane proteins that insert both dependently and independently of the Sec translocase complex, as well as at least some lipoproteins. Aids folding of multispanning membrane proteins. The protein is Membrane protein insertase YidC of Haemophilus influenzae (strain ATCC 51907 / DSM 11121 / KW20 / Rd).